A 251-amino-acid chain; its full sequence is Probable transcriptional regulatory protein MAB_2888c (251 aa).

Positions 1-20 are disordered; sequence MSGHSKWATTKHQKAVKDAR.

The protein belongs to the TACO1 family.

The protein resides in the cytoplasm. This Mycobacteroides abscessus (strain ATCC 19977 / DSM 44196 / CCUG 20993 / CIP 104536 / JCM 13569 / NCTC 13031 / TMC 1543 / L948) (Mycobacterium abscessus) protein is Probable transcriptional regulatory protein MAB_2888c.